The chain runs to 256 residues: Doublecortin domain-containing protein (256 aa).

The segment at 71-103 (NVFERLTDTAYYTGSHRERFDEFGNGRGIAGRE) is partial p25alpha domain. A Doublecortin domain is found at 152–226 (RLMWLYRNGD…AKYLCTSGEP (75 aa)).

Its subcellular location is the cytoplasm. The protein localises to the cytoskeleton. Functionally, specifically required in the formation and maintenance of the conoid fibers; the conoid is a component of the cytoskeletal apical complex, which is composed of a left-handed spiral of 14 fibers made from a nontubular tubulin polymer. Promotes the organization, curvature, and stability of the conoid fibers, and probably bridges other conoid components to the tubulin core. The protein is Doublecortin domain-containing protein of Toxoplasma gondii (strain ATCC 50861 / VEG).